We begin with the raw amino-acid sequence, 554 residues long: MGRNLGSAFRQELANLDKDPDSHKTAMSNLRSIVKDLDAKVVHVFVAQLSDVKEIGLESGGYTVSLFEDLARAHGVKIAPHIDIIMPAIIRTLSSSEGSLRVQQACSRAVAAMARYGIDPTTPEDKKTNVIHSLCKPLSDSLIDSQHQQHLALGSALCLKSLVDCDNWRSASSEMVNNVCQSLAVALEATSSEAKSHMALVMALSKHNPFTVEAYARLFVKSGLRILDLGVVEGDSQKRLLAIQMLNFLMKNLNPKSISSELELIYQEMEKYQKDQHYVKMAAHETMRQAERLICEADPMFDAENCKPRNSLSGSVKSTSSLREHDGSVYSRQDRSYVNDQDEYDVLFSGVASGRTLVSGSPLVTFGDNNQETGFVIESPRIGDQIQCSGVENGNIESVWFHQRNRSSEFNESVCSRTNRSRSSRRNTKKRQSGDICSKHHRHGFAQDPFTELLDNRQQLLQYSETSSSSSIYDTSGTTTPTNTTEDICEKPKTDLDSEAKLKTVETELDPRLGRSKGVLKLGLSVFSIAVAGFASFMWMYLQDDMMPPHLVPT.

The tract at residues D17–A290 is ARMADILLO-type fold. Disordered regions lie at residues C306–R332, N411–R442, and E465–D487. The segment covering S311 to S321 has biased composition (low complexity). Positions L322–R332 are enriched in basic and acidic residues. Residues N419–R431 are compositionally biased toward basic residues. Over residues E465–T485 the composition is skewed to low complexity. Positions L509–T554 constitute a KASH domain. Residues L522–L542 form a helical membrane-spanning segment. A Required for nuclear localization motif is present at residues L551–T554.

As to quaternary structure, interacts with SUN1 and SUN2. As to expression, expressed in epidermal cells, mesophyll cells, trichomes and root cells.

The protein localises to the nucleus membrane. Functionally, plays a role in innate immunity against the oomycete pathogen A.arabidopsidis (Hpa). This Arabidopsis thaliana (Mouse-ear cress) protein is Protein SINE2.